The primary structure comprises 310 residues: Ribosomal RNA small subunit methyltransferase H (310 aa).

S-adenosyl-L-methionine-binding positions include 32 to 34 (GGH), Asp52, Phe79, Asp100, and Gln107.

This sequence belongs to the methyltransferase superfamily. RsmH family.

The protein localises to the cytoplasm. The enzyme catalyses cytidine(1402) in 16S rRNA + S-adenosyl-L-methionine = N(4)-methylcytidine(1402) in 16S rRNA + S-adenosyl-L-homocysteine + H(+). Functionally, specifically methylates the N4 position of cytidine in position 1402 (C1402) of 16S rRNA. The sequence is that of Ribosomal RNA small subunit methyltransferase H from Geobacillus kaustophilus (strain HTA426).